The following is a 216-amino-acid chain: Adenylate kinase (216 aa).

An ATP-binding site is contributed by 11–16 (GSGKGT). The NMP stretch occupies residues 31-60 (ATGDLFRKAIECGDELGDTVKSYMERGELV). Residues Thr32, Arg37, 58–60 (ELV), 86–89 (GFPR), and Gln93 contribute to the AMP site. The tract at residues 127–163 (GRWVCRSCQSPYQSGCAEVTKGKCSRCQGELYQRPDD) is LID. ATP is bound at residue Arg128. The Zn(2+) site is built by Cys131, Cys134, Cys150, and Cys153. Residues Arg160 and Arg171 each contribute to the AMP site. Position 199 (Ala199) interacts with ATP.

Belongs to the adenylate kinase family. Monomer.

It is found in the cytoplasm. The catalysed reaction is AMP + ATP = 2 ADP. It functions in the pathway purine metabolism; AMP biosynthesis via salvage pathway; AMP from ADP: step 1/1. Its function is as follows. Catalyzes the reversible transfer of the terminal phosphate group between ATP and AMP. Plays an important role in cellular energy homeostasis and in adenine nucleotide metabolism. This Dehalococcoides mccartyi (strain ATCC BAA-2100 / JCM 16839 / KCTC 5957 / BAV1) protein is Adenylate kinase.